The primary structure comprises 488 residues: Rhamnulokinase (488 aa).

ATP is bound at residue 13–17 (ASSGR). C68 and C222 are oxidised to a cystine. Substrate contacts are provided by residues G83 and 236 to 238 (HDT). The Proton acceptor role is filled by D237. ATP is bound at residue T259. A substrate-binding site is contributed by N296. ATP is bound at residue Q304. A disulfide bond links C353 and C370. G402 provides a ligand contact to ATP. Residues C413 and C417 are joined by a disulfide bond.

It belongs to the rhamnulokinase family. Mg(2+) serves as cofactor.

It catalyses the reaction L-rhamnulose + ATP = L-rhamnulose 1-phosphate + ADP + H(+). It functions in the pathway carbohydrate degradation; L-rhamnose degradation; glycerone phosphate from L-rhamnose: step 2/3. Involved in the catabolism of L-rhamnose (6-deoxy-L-mannose). Catalyzes the transfer of the gamma-phosphate group from ATP to the 1-hydroxyl group of L-rhamnulose to yield L-rhamnulose 1-phosphate. The polypeptide is Rhamnulokinase (Klebsiella pneumoniae subsp. pneumoniae (strain ATCC 700721 / MGH 78578)).